The sequence spans 303 residues: Signal recognition particle receptor FtsY (303 aa).

GTP-binding positions include 108-115, 190-194, and 254-257; these read GVNGAGKT, DTAGR, and TKLD.

This sequence belongs to the GTP-binding SRP family. FtsY subfamily. In terms of assembly, part of the signal recognition particle protein translocation system, which is composed of SRP and FtsY. SRP is a ribonucleoprotein composed of Ffh and a 4.5S RNA molecule.

Its subcellular location is the cell inner membrane. It localises to the cytoplasm. It catalyses the reaction GTP + H2O = GDP + phosphate + H(+). Its function is as follows. Involved in targeting and insertion of nascent membrane proteins into the cytoplasmic membrane. Acts as a receptor for the complex formed by the signal recognition particle (SRP) and the ribosome-nascent chain (RNC). Interaction with SRP-RNC leads to the transfer of the RNC complex to the Sec translocase for insertion into the membrane, the hydrolysis of GTP by both Ffh and FtsY, and the dissociation of the SRP-FtsY complex into the individual components. The polypeptide is Signal recognition particle receptor FtsY (Rickettsia bellii (strain RML369-C)).